Here is a 98-residue protein sequence, read N- to C-terminus: NADH-ubiquinone oxidoreductase chain 4L (98 aa).

A run of 3 helical transmembrane segments spans residues 1–21 (MSLVYMNIMTAFTVSLTGLLM), 29–49 (SLLCLEGMMLALFVMATLTIL), and 61–81 (IILLVFAACEAALGLSLLVMV).

Belongs to the complex I subunit 4L family. As to quaternary structure, core subunit of respiratory chain NADH dehydrogenase (Complex I) which is composed of 45 different subunits.

It localises to the mitochondrion inner membrane. The catalysed reaction is a ubiquinone + NADH + 5 H(+)(in) = a ubiquinol + NAD(+) + 4 H(+)(out). Core subunit of the mitochondrial membrane respiratory chain NADH dehydrogenase (Complex I) which catalyzes electron transfer from NADH through the respiratory chain, using ubiquinone as an electron acceptor. Part of the enzyme membrane arm which is embedded in the lipid bilayer and involved in proton translocation. The chain is NADH-ubiquinone oxidoreductase chain 4L (MT-ND4L) from Elaphodus cephalophus (Tufted deer).